Consider the following 312-residue polypeptide: Beta-ketoacyl-[acyl-carrier-protein] synthase III (312 aa).

Catalysis depends on residues Cys112 and His237. Residues Gln238–Arg242 are ACP-binding. The active site involves Asn267.

The protein belongs to the thiolase-like superfamily. FabH family. In terms of assembly, homodimer.

It localises to the cytoplasm. It catalyses the reaction malonyl-[ACP] + acetyl-CoA + H(+) = 3-oxobutanoyl-[ACP] + CO2 + CoA. It functions in the pathway lipid metabolism; fatty acid biosynthesis. Catalyzes the condensation reaction of fatty acid synthesis by the addition to an acyl acceptor of two carbons from malonyl-ACP. Catalyzes the first condensation reaction which initiates fatty acid synthesis and may therefore play a role in governing the total rate of fatty acid production. Possesses both acetoacetyl-ACP synthase and acetyl transacylase activities. Its substrate specificity determines the biosynthesis of branched-chain and/or straight-chain of fatty acids. The protein is Beta-ketoacyl-[acyl-carrier-protein] synthase III of Listeria welshimeri serovar 6b (strain ATCC 35897 / DSM 20650 / CCUG 15529 / CIP 8149 / NCTC 11857 / SLCC 5334 / V8).